An 85-amino-acid polypeptide reads, in one-letter code: Large ribosomal subunit protein bL27 (85 aa).

Residues 1 to 25 form a disordered region; sequence MAHKKAGGSSRNGRDSHSKRLGVKH.

This sequence belongs to the bacterial ribosomal protein bL27 family.

The protein is Large ribosomal subunit protein bL27 of Buchnera aphidicola subsp. Baizongia pistaciae (strain Bp).